A 215-amino-acid polypeptide reads, in one-letter code: Cytochrome b6 (215 aa).

A helical membrane pass occupies residues 32–52 (IFYCIGGITFTCFLVQVATGF). C35 contributes to the heme c binding site. 2 residues coordinate heme b: H86 and H100. 3 consecutive transmembrane segments (helical) span residues 90-110 (ASMMVLMMILHVCRVYLTGGF), 116-136 (LTWVTGVIMAVCTVSFGVTGY), and 186-206 (LHTFVLPLATAVFMLMHFLMI). Heme b-binding residues include H187 and H202.

This sequence belongs to the cytochrome b family. PetB subfamily. The 4 large subunits of the cytochrome b6-f complex are cytochrome b6, subunit IV (17 kDa polypeptide, PetD), cytochrome f and the Rieske protein, while the 4 small subunits are PetG, PetL, PetM and PetN. The complex functions as a dimer. Heme b is required as a cofactor. Requires heme c as cofactor.

It localises to the plastid. The protein resides in the chloroplast thylakoid membrane. Its function is as follows. Component of the cytochrome b6-f complex, which mediates electron transfer between photosystem II (PSII) and photosystem I (PSI), cyclic electron flow around PSI, and state transitions. In Chlorella vulgaris (Green alga), this protein is Cytochrome b6.